Here is a 430-residue protein sequence, read N- to C-terminus: Enolase (430 aa).

Gln-165 serves as a coordination point for (2R)-2-phosphoglycerate. Glu-207 serves as the catalytic Proton donor. Positions 244, 287, and 314 each coordinate Mg(2+). (2R)-2-phosphoglycerate contacts are provided by Lys-339, Arg-368, Ser-369, and Lys-390. Lys-339 acts as the Proton acceptor in catalysis.

Belongs to the enolase family. Component of the RNA degradosome, a multiprotein complex involved in RNA processing and mRNA degradation. Mg(2+) serves as cofactor.

Its subcellular location is the cytoplasm. It localises to the secreted. The protein localises to the cell surface. It catalyses the reaction (2R)-2-phosphoglycerate = phosphoenolpyruvate + H2O. The protein operates within carbohydrate degradation; glycolysis; pyruvate from D-glyceraldehyde 3-phosphate: step 4/5. Functionally, catalyzes the reversible conversion of 2-phosphoglycerate (2-PG) into phosphoenolpyruvate (PEP). It is essential for the degradation of carbohydrates via glycolysis. This Xanthomonas campestris pv. campestris (strain 8004) protein is Enolase.